Reading from the N-terminus, the 192-residue chain is Glutaredoxin-C9 (192 aa).

A Glutaredoxin domain is found at 89–191 (YERVARMASG…PLLKQAGALW (103 aa)). Residues Cys109 and Cys112 are joined by a disulfide bond. Residues 189-192 (ALWL) carry the Responsive for interaction with TGA factors motif.

This sequence belongs to the glutaredoxin family. CC-type subfamily.

The protein resides in the cytoplasm. Its subcellular location is the nucleus. Has a glutathione-disulfide oxidoreductase activity in the presence of NADPH and glutathione reductase. Reduces low molecular weight disulfides and proteins. This Oryza sativa subsp. japonica (Rice) protein is Glutaredoxin-C9 (GRXC9).